Consider the following 214-residue polypeptide: Type 4 apparatus protein DotN (214 aa).

C52, C55, C84, and C87 together coordinate Zn(2+).

As to quaternary structure, the T4BSS is a complex nanomachine composed of several subcomplexes. This subunit is part of the Type IV Coupling Complex (T4CC), a subcomplex composed of the DotLMNYZ core and the IcmSW-LvgA adapter subunits, linked by the C-terminal tail of DotL. Six DotLMNYZ hetero-pentameric units may assemble into a hexameric nanomachine, forming an inner membrane channel for effectors to pass through. Interacts directly with DotL. Interacts with DotZ.

The protein localises to the cytoplasm. Component of the Dot/Icm type IVB secretion system (T4BSS), which is used to inject bacterial effector proteins into eukaryotic host cells. Part of a subcomplex which recruits effector proteins and delivers them to the core transmembrane subcomplex. The polypeptide is Type 4 apparatus protein DotN (Legionella pneumophila subsp. pneumophila (strain Philadelphia 1 / ATCC 33152 / DSM 7513)).